Consider the following 110-residue polypeptide: Nitrogenase-stabilizing/protective protein NifW (110 aa).

This sequence belongs to the NifW family. In terms of assembly, homotrimer; associates with NifD.

In terms of biological role, may protect the nitrogenase Fe-Mo protein from oxidative damage. This chain is Nitrogenase-stabilizing/protective protein NifW, found in Acidithiobacillus ferrooxidans (strain ATCC 23270 / DSM 14882 / CIP 104768 / NCIMB 8455) (Ferrobacillus ferrooxidans (strain ATCC 23270)).